Consider the following 360-residue polypeptide: NAD(P)H-quinone oxidoreductase subunit 1, chloroplastic (360 aa).

8 helical membrane passes run 29 to 49 (WIPLPILVVIVGATIGVLVIV), 96 to 116 (IWLFTLGPALVVIPVFLAYLV), 128 to 148 (ISLGVFFWIAISSIAPIGLLM), 166 to 186 (AAQAISYEIPLSLCVLAICLL), 204 to 224 (ILGWNVWRQPIGFVSFLIAAL), 255 to 277 (GLFYVGSYVNLLLSSLFATILYL), 297 to 317 (IFAAFLGIGMTLLKAYLFIFL), and 333 to 353 (LLDLGWKFLLPISLGNLLLTA).

The protein belongs to the complex I subunit 1 family. NDH is composed of at least 16 different subunits, 5 of which are encoded in the nucleus.

The protein localises to the plastid. Its subcellular location is the chloroplast thylakoid membrane. The enzyme catalyses a plastoquinone + NADH + (n+1) H(+)(in) = a plastoquinol + NAD(+) + n H(+)(out). It carries out the reaction a plastoquinone + NADPH + (n+1) H(+)(in) = a plastoquinol + NADP(+) + n H(+)(out). In terms of biological role, NDH shuttles electrons from NAD(P)H:plastoquinone, via FMN and iron-sulfur (Fe-S) centers, to quinones in the photosynthetic chain and possibly in a chloroplast respiratory chain. The immediate electron acceptor for the enzyme in this species is believed to be plastoquinone. Couples the redox reaction to proton translocation, and thus conserves the redox energy in a proton gradient. This Chlorokybus atmophyticus (Soil alga) protein is NAD(P)H-quinone oxidoreductase subunit 1, chloroplastic.